Here is a 473-residue protein sequence, read N- to C-terminus: Proline--tRNA ligase (473 aa).

Belongs to the class-II aminoacyl-tRNA synthetase family. ProS type 3 subfamily. As to quaternary structure, homodimer.

The protein resides in the cytoplasm. It carries out the reaction tRNA(Pro) + L-proline + ATP = L-prolyl-tRNA(Pro) + AMP + diphosphate. In terms of biological role, catalyzes the attachment of proline to tRNA(Pro) in a two-step reaction: proline is first activated by ATP to form Pro-AMP and then transferred to the acceptor end of tRNA(Pro). The polypeptide is Proline--tRNA ligase (Mesoplasma florum (strain ATCC 33453 / NBRC 100688 / NCTC 11704 / L1) (Acholeplasma florum)).